Reading from the N-terminus, the 362-residue chain is Fe-S cluster assembly protein DRE2 (362 aa).

The segment at methionine 1–glutamine 28 is disordered. Residues threonine 15 to glutamine 28 are compositionally biased toward low complexity. The tract at residues alanine 24–valine 165 is N-terminal SAM-like domain. Positions proline 166–leucine 254 are linker. [2Fe-2S] cluster-binding residues include cysteine 264, cysteine 275, cysteine 278, and cysteine 280. The segment at cysteine 264–cysteine 280 is fe-S binding site A. Residues cysteine 325, cysteine 328, cysteine 336, and cysteine 339 each contribute to the [4Fe-4S] cluster site. 2 consecutive short sequence motifs (cx2C motif) follow at residues cysteine 325–cysteine 328 and cysteine 336–cysteine 339. The interval cysteine 325 to cysteine 339 is fe-S binding site B.

Belongs to the anamorsin family. As to quaternary structure, monomer. Interacts with TAH18. Interacts with MIA40. The cofactor is [2Fe-2S] cluster. [4Fe-4S] cluster is required as a cofactor.

It is found in the cytoplasm. Its subcellular location is the mitochondrion intermembrane space. Its function is as follows. Component of the cytosolic iron-sulfur (Fe-S) protein assembly (CIA) machinery required for the maturation of extramitochondrial Fe-S proteins. Part of an electron transfer chain functioning in an early step of cytosolic Fe-S biogenesis, facilitating the de novo assembly of a [4Fe-4S] cluster on the scaffold complex CFD1-NBP35. Electrons are transferred to DRE2 from NADPH via the FAD- and FMN-containing protein TAH18. TAH18-DRE2 are also required for the assembly of the diferric tyrosyl radical cofactor of ribonucleotide reductase (RNR), probably by providing electrons for reduction during radical cofactor maturation in the catalytic small subunit RNR2. The chain is Fe-S cluster assembly protein DRE2 from Chaetomium globosum (strain ATCC 6205 / CBS 148.51 / DSM 1962 / NBRC 6347 / NRRL 1970) (Soil fungus).